Here is a 203-residue protein sequence, read N- to C-terminus: N-(5'-phosphoribosyl)anthranilate isomerase (203 aa).

It belongs to the TrpF family.

The catalysed reaction is N-(5-phospho-beta-D-ribosyl)anthranilate = 1-(2-carboxyphenylamino)-1-deoxy-D-ribulose 5-phosphate. Its pathway is amino-acid biosynthesis; L-tryptophan biosynthesis; L-tryptophan from chorismate: step 3/5. The protein is N-(5'-phosphoribosyl)anthranilate isomerase of Thermoanaerobacter sp. (strain X514).